Consider the following 397-residue polypeptide: Gastric triacylglycerol lipase (397 aa).

A signal peptide spans 1-19 (MWWLLVTVCFIHMSGNAFC). An N-linked (GlcNAc...) asparagine glycan is attached at asparagine 33. The 300-residue stretch at 77–376 (PVVFLQHGLL…PNYNHLDFIW (300 aa)) folds into the AB hydrolase-1 domain. Serine 171 functions as the Nucleophile in the catalytic mechanism. A disulfide bond links cysteine 245 and cysteine 254. 2 N-linked (GlcNAc...) asparagine glycosylation sites follow: asparagine 270 and asparagine 326. Residues aspartate 342 and histidine 371 each act as charge relay system in the active site.

The protein belongs to the AB hydrolase superfamily. Lipase family.

It is found in the secreted. It catalyses the reaction a triacylglycerol + H2O = a diacylglycerol + a fatty acid + H(+). The catalysed reaction is 1,2,3-tri-(9Z-octadecenoyl)-glycerol + H2O = 1,2-di-(9Z-octadecenoyl)-sn-glycerol + (9Z)-octadecenoate + H(+). The enzyme catalyses 1,2,3-trioctanoylglycerol + H2O = 1,2-dioctanoyl-sn-glycerol + octanoate + H(+). Inhibited by diethylp-nitrophenyl phosphate but not inhibited by thiol reagents 5,5'-dithiobis(2-nitrobenzoic acid) or 4,4'-dithiopyridine. Its function is as follows. Catalyzes the hydrolysis of triacylglycerols to yield free fatty acids, diacylglycerol, monoacylglycerol, and glycerol. Shows a preferential hydrolysis at the sn-3 position of triacylglycerol. This Bos taurus (Bovine) protein is Gastric triacylglycerol lipase (LIPF).